The sequence spans 148 residues: Ribonuclease H (148 aa).

The RNase H type-1 domain maps to methionine 1 to aspartate 142. Mg(2+) contacts are provided by aspartate 10, glutamate 48, aspartate 70, and aspartate 134. The interval glycine 129–arginine 148 is disordered.

It belongs to the RNase H family. Monomer. The cofactor is Mg(2+).

The protein localises to the cytoplasm. It carries out the reaction Endonucleolytic cleavage to 5'-phosphomonoester.. Its function is as follows. Endonuclease that specifically degrades the RNA of RNA-DNA hybrids. This is Ribonuclease H from Pseudomonas putida (strain W619).